The primary structure comprises 1215 residues: Zinc finger E-box-binding homeobox 2 (1215 aa).

The interval 1 to 111 is disordered; it reads MKQPIMADGP…ILQASVAGPE (111 aa). Over residues 12-24 the composition is skewed to basic residues; sequence CKRRKQANPRRKN. Residues 57 to 74 show a composition bias toward polar residues; it reads DQDTSPASMPNHESSPHM. The span at 89 to 98 shows a compositional bias: basic and acidic residues; the sequence is RESVVEHSWH. At S142 the chain carries Phosphoserine. 3 consecutive C2H2-type zinc fingers follow at residues 211–234, 241–263, and 282–304; these read LTCPYCDRGYKRLTSLKEHIKYRH, FSCPLCSYTFAYRTQLERHMVTH, and FKCTECGKAFKYKHHLKEHLRIH. The C2H2-type 4; atypical zinc finger occupies 310–334; that stretch reads YECPNCKKRFSHSGSYSSHISSKKC. Residues S356, S360, and S364 each carry the phosphoserine modification. Position 377 is an N6-acetyllysine (K377). Residue K391 forms a Glycyl lysine isopeptide (Lys-Gly) (interchain with G-Cter in SUMO); alternate linkage. A Glycyl lysine isopeptide (Lys-Gly) (interchain with G-Cter in SUMO2); alternate cross-link involves residue K391. The segment at 437–487 is SMAD-MH2 binding domain; it reads QHLGVGMEAPLLGFPTMNSNLSEVQKVLQIVDNTVSRQKMDCKTEDISKLK. Residues K479 and K555 each participate in a glycyl lysine isopeptide (Lys-Gly) (interchain with G-Cter in SUMO2) cross-link. Residues 581-605 form a C2H2-type 5; degenerate zinc finger; it reads FSCQFCKESFPGPIPLHQHERYLCK. Glycyl lysine isopeptide (Lys-Gly) (interchain with G-Cter in SUMO2) cross-links involve residues K611 and K632. Positions 644-703 form a DNA-binding region, homeobox; atypical; the sequence is GLTSPINPYKDHMSVLKAYYAMNMEPNSDELLKISIAVGLPQEFVKEWFEQRKVYQYSNS. S647 carries the phosphoserine modification. Disordered regions lie at residues 702–740 and 772–811; these read NSRSPSLERTSKPLAPNSNPTTKDSLLPRSPVKPMDSIT and VDKLDHSRSNTPSPLNLSSTSSKNSHSSSYTPNSFSSEEL. K713 participates in a covalent cross-link: Glycyl lysine isopeptide (Lys-Gly) (interchain with G-Cter in SUMO2). 2 positions are modified to phosphoserine: S731 and S780. A compositionally biased stretch (low complexity) spans 780–808; that stretch reads SNTPSPLNLSSTSSKNSHSSSYTPNSFSS. T782 is subject to Phosphothreonine. A Phosphoserine modification is found at S784. K866 participates in a covalent cross-link: Glycyl lysine isopeptide (Lys-Gly) (interchain with G-Cter in SUMO); alternate. K866 is covalently cross-linked (Glycyl lysine isopeptide (Lys-Gly) (interchain with G-Cter in SUMO2); alternate). 2 C2H2-type zinc fingers span residues 999 to 1021 and 1027 to 1049; these read YACDLCDKTFQKSSSLLRHKYEH and HQCQICKKAFKHKHHLIEHSRLH. A C2H2-type 8; atypical zinc finger spans residues 1055-1076; it reads YQCDKCGKRFSHSGSYSQHMNH. Residues 1117–1215 form a disordered region; sequence TPQGYSDSEE…EEDNMEDGME (99 aa). A phosphoserine mark is found at S1122 and S1124. The segment covering 1127–1149 has biased composition (basic and acidic residues); it reads RESMPRDGESEKEHEKEGEEGYG. A compositionally biased stretch (acidic residues) spans 1157–1167; it reads DEEEEEEEEES. Composition is skewed to basic and acidic residues over residues 1168-1179 and 1186-1205; these read ENKSMDTDPETI and GDHSMDDSSEDGKMETKSDH. S1203 is modified (phosphoserine). The span at 1206 to 1215 shows a compositional bias: acidic residues; sequence EEDNMEDGME.

The protein belongs to the delta-EF1/ZFH-1 C2H2-type zinc-finger family. Interacts with CBX4 and CTBP1. Binds activated SMAD1, activated SMAD2 and activated SMAD3; binding with SMAD4 is not detected. Sumoylation on Lys-391 and Lys-866 is promoted by the E3 SUMO-protein ligase CBX4, and impairs interaction with CTBP1 and transcription repression activity.

It localises to the nucleus. The protein localises to the chromosome. Functionally, transcriptional inhibitor that binds to DNA sequence 5'-CACCT-3' in different promoters. Represses transcription of E-cadherin. Represses expression of MEOX2. This is Zinc finger E-box-binding homeobox 2 (Zeb2) from Mus musculus (Mouse).